A 447-amino-acid chain; its full sequence is Tubulin alpha-2 chain (447 aa).

GTP is bound by residues Q11, E71, G144, T145, T179, N206, and N228. E71 lines the Mg(2+) pocket. The active site involves E254.

It belongs to the tubulin family. Dimer of alpha and beta chains. A typical microtubule is a hollow water-filled tube with an outer diameter of 25 nm and an inner diameter of 15 nM. Alpha-beta heterodimers associate head-to-tail to form protofilaments running lengthwise along the microtubule wall with the beta-tubulin subunit facing the microtubule plus end conferring a structural polarity. Microtubules usually have 13 protofilaments but different protofilament numbers can be found in some organisms and specialized cells. Requires Mg(2+) as cofactor. In terms of processing, undergoes a tyrosination/detyrosination cycle, the cyclic removal and re-addition of a C-terminal tyrosine residue by the enzymes tubulin tyrosine carboxypeptidase (TTCP) and tubulin tyrosine ligase (TTL), respectively.

The protein resides in the cytoplasm. It localises to the cytoskeleton. The enzyme catalyses GTP + H2O = GDP + phosphate + H(+). Functionally, tubulin is the major constituent of microtubules, a cylinder consisting of laterally associated linear protofilaments composed of alpha- and beta-tubulin heterodimers. Microtubules grow by the addition of GTP-tubulin dimers to the microtubule end, where a stabilizing cap forms. Below the cap, tubulin dimers are in GDP-bound state, owing to GTPase activity of alpha-tubulin. The chain is Tubulin alpha-2 chain (TUBA2) from Eleusine indica (Goosegrass).